The primary structure comprises 1938 residues: Myosin-1 (1938 aa).

The Myosin N-terminal SH3-like domain maps to 33–82 (DAKTSVFVADPKESFVKATVQSREGGKVTAKTEAGATVTVKEDQCFPMNP). A phosphothreonine mark is found at Thr64 and Thr69. A Myosin motor domain is found at 86–781 (DKIEDMAMMT…LLGLLEEMRD (696 aa)). Lys130 is subject to N6,N6,N6-trimethyllysine. 179 to 186 (GESGAGKT) is a binding site for ATP. Residue Tyr389 is modified to Phosphotyrosine. Thr419 is subject to Phosphothreonine. Tyr424 carries the post-translational modification Phosphotyrosine. A Phosphoserine modification is found at Ser625. The actin-binding stretch occupies residues 658–680 (LNKLMTNLRSTHPHFVRCIIPNE). Pros-methylhistidine is present on His756. The actin-binding stretch occupies residues 760–774 (KFGHTKVFFKAGLLG). In terms of domain architecture, IQ spans 784–813 (LAQIITRTQARCRGFLARVEYQRMVERRES). Positions 842–1938 (LLKSAETEKE…EVHTKIISEE (1097 aa)) form a coiled coil. Ser1091 and Ser1095 each carry phosphoserine. Disordered stretches follow at residues 1124-1146 (EIEAERASRAKAEKQRSDLSREL) and 1152-1171 (RLEEAGGATSAQIEMNKKRE). The segment covering 1127-1146 (AERASRAKAEKQRSDLSREL) has biased composition (basic and acidic residues). A phosphoserine mark is found at Ser1161 and Ser1236. Thr1240 bears the Phosphothreonine mark. Ser1242 is modified (phosphoserine). Phosphothreonine is present on Thr1254. A Phosphoserine modification is found at Ser1260. Thr1285 is subject to Phosphothreonine. Phosphoserine is present on residues Ser1291, Ser1302, and Ser1305. Tyr1463 is modified (phosphotyrosine). The residue at position 1466 (Thr1466) is a Phosphothreonine. Ser1473 is subject to Phosphoserine. The residue at position 1491 (Tyr1491) is a Phosphotyrosine. Position 1494 is a phosphoserine (Ser1494). Position 1500 is a phosphothreonine (Thr1500). Position 1513 is a phosphoserine (Ser1513). Thr1516 is subject to Phosphothreonine. Phosphoserine is present on residues Ser1541, Ser1553, Ser1573, Ser1713, and Ser1725. 2 positions are modified to phosphothreonine: Thr1729 and Thr1735. Position 1738 is a phosphoserine (Ser1738).

The protein belongs to the TRAFAC class myosin-kinesin ATPase superfamily. Myosin family. As to quaternary structure, muscle myosin is a hexameric protein that consists of 2 heavy chain subunits (MHC), 2 alkali light chain subunits (MLC) and 2 regulatory light chain subunits (MLC-2). Interacts with SLC26A5.

The protein localises to the cytoplasm. It localises to the myofibril. Its function is as follows. Required for normal hearing. It plays a role in cochlear amplification of auditory stimuli, likely through the positive regulation of prestin (SLC26A5) activity and outer hair cell (OHC) electromotility. This is Myosin-1 (MYH1) from Equus caballus (Horse).